The sequence spans 352 residues: Protein-glutamate methylesterase/protein-glutamine glutaminase 2 (352 aa).

Positions 1-116 (MIVDDSAIVR…KDFIQDAASD (116 aa)) constitute a Response regulatory domain. Asp50 carries the 4-aspartylphosphate modification. The CheB-type methylesterase domain occupies 159 to 351 (SKTTEHVVAI…QEIMRYAHLK (193 aa)). Active-site residues include Ser171, His197, and Asp293.

This sequence belongs to the CheB family. In terms of processing, phosphorylated by CheA. Phosphorylation of the N-terminal regulatory domain activates the methylesterase activity.

The protein resides in the cytoplasm. It carries out the reaction [protein]-L-glutamate 5-O-methyl ester + H2O = L-glutamyl-[protein] + methanol + H(+). The enzyme catalyses L-glutaminyl-[protein] + H2O = L-glutamyl-[protein] + NH4(+). Functionally, involved in chemotaxis. Part of a chemotaxis signal transduction system that modulates chemotaxis in response to various stimuli. Catalyzes the demethylation of specific methylglutamate residues introduced into the chemoreceptors (methyl-accepting chemotaxis proteins or MCP) by CheR. Also mediates the irreversible deamidation of specific glutamine residues to glutamic acid. This chain is Protein-glutamate methylesterase/protein-glutamine glutaminase 2, found in Shewanella denitrificans (strain OS217 / ATCC BAA-1090 / DSM 15013).